A 118-amino-acid chain; its full sequence is Large ribosomal subunit protein bL19 (118 aa).

This sequence belongs to the bacterial ribosomal protein bL19 family.

Its function is as follows. This protein is located at the 30S-50S ribosomal subunit interface and may play a role in the structure and function of the aminoacyl-tRNA binding site. This chain is Large ribosomal subunit protein bL19, found in Buchnera aphidicola subsp. Baizongia pistaciae (strain Bp).